The primary structure comprises 782 residues: LPS-assembly protein LptD (782 aa).

The N-terminal stretch at 1–24 is a signal peptide; it reads MKKNSYTRLSIAILSTLYSVSSLA.

This sequence belongs to the LptD family. In terms of assembly, component of the lipopolysaccharide transport and assembly complex. Interacts with LptE and LptA.

The protein resides in the cell outer membrane. Together with LptE, is involved in the assembly of lipopolysaccharide (LPS) at the surface of the outer membrane. The sequence is that of LPS-assembly protein LptD from Pasteurella multocida (strain Pm70).